A 196-amino-acid chain; its full sequence is Chorion protein S19 (196 aa).

Positions 1-16 (MNTFATLAIFISACLA) are cleaved as a signal peptide.

Belongs to the chorion protein S19 family.

The protein localises to the secreted. Chorion membrane (egg shell) protein; plays a role in protecting the egg from the environment. This is Chorion protein S19 (Cp19) from Drosophila grimshawi (Hawaiian fruit fly).